Here is a 144-residue protein sequence, read N- to C-terminus: Large ribosomal subunit protein uL13 (144 aa).

The protein belongs to the universal ribosomal protein uL13 family. Part of the 50S ribosomal subunit.

Functionally, this protein is one of the early assembly proteins of the 50S ribosomal subunit, although it is not seen to bind rRNA by itself. It is important during the early stages of 50S assembly. This Oleidesulfovibrio alaskensis (strain ATCC BAA-1058 / DSM 17464 / G20) (Desulfovibrio alaskensis) protein is Large ribosomal subunit protein uL13.